The sequence spans 109 residues: T cell receptor alpha variable 27 (109 aa).

Residues 1 to 19 form the signal peptide; sequence MVLKFSVSILWIQLAWVST. One can recognise an Ig-like domain in the interval 20-109; the sequence is QLLEQSPQFL…GDTGLYLCAG (90 aa). Asparagine 36 and asparagine 42 each carry an N-linked (GlcNAc...) asparagine glycan. The cysteines at positions 41 and 107 are disulfide-linked.

In terms of assembly, alpha-beta TR is a heterodimer composed of an alpha and beta chain; disulfide-linked. The alpha-beta TR is associated with the transmembrane signaling CD3 coreceptor proteins to form the TR-CD3 (TcR or TCR). The assembly of alpha-beta TR heterodimers with CD3 occurs in the endoplasmic reticulum where a single alpha-beta TR heterodimer associates with one CD3D-CD3E heterodimer, one CD3G-CD3E heterodimer and one CD247 homodimer forming a stable octameric structure. CD3D-CD3E and CD3G-CD3E heterodimers preferentially associate with TR alpha and TR beta chains, respectively. The association of the CD247 homodimer is the last step of TcR assembly in the endoplasmic reticulum and is required for transport to the cell surface. As to quaternary structure, (Microbial infection) Interacts with Staphylococcus aureus enterotoxin H/entH.

The protein resides in the cell membrane. In terms of biological role, v region of the variable domain of T cell receptor (TR) alpha chain that participates in the antigen recognition. Alpha-beta T cell receptors are antigen specific receptors which are essential to the immune response and are present on the cell surface of T lymphocytes. Recognize peptide-major histocompatibility (MH) (pMH) complexes that are displayed by antigen presenting cells (APC), a prerequisite for efficient T cell adaptive immunity against pathogens. Binding of alpha-beta TR to pMH complex initiates TR-CD3 clustering on the cell surface and intracellular activation of LCK that phosphorylates the ITAM motifs of CD3G, CD3D, CD3E and CD247 enabling the recruitment of ZAP70. In turn, ZAP70 phosphorylates LAT, which recruits numerous signaling molecules to form the LAT signalosome. The LAT signalosome propagates signal branching to three major signaling pathways, the calcium, the mitogen-activated protein kinase (MAPK) kinase and the nuclear factor NF-kappa-B (NF-kB) pathways, leading to the mobilization of transcription factors that are critical for gene expression and essential for T cell growth and differentiation. The T cell repertoire is generated in the thymus, by V-(D)-J rearrangement. This repertoire is then shaped by intrathymic selection events to generate a peripheral T cell pool of self-MH restricted, non-autoaggressive T cells. Post-thymic interaction of alpha-beta TR with the pMH complexes shapes TR structural and functional avidity. In Homo sapiens (Human), this protein is T cell receptor alpha variable 27.